The chain runs to 361 residues: Diacylglycerol O-acyltransferase 2 (361 aa).

The Cytoplasmic portion of the chain corresponds to 1–42; the sequence is MKTIIAAYSGVLRGTGSSLLSAVHDLPNIPWLSKSSVVRHLQ. Residues 43–61 form a helical membrane-spanning segment; the sequence is IISVLQWVLSFLILGVACT. At 62-65 the chain is on the lumenal side; that stretch reads AVLV. Residues 66-85 traverse the membrane as a helical segment; sequence YIFCTDLWLIAALYLTWMVL. The Cytoplasmic portion of the chain corresponds to 86-361; sequence DWNTPYKGGR…LHDSEMLEIV (276 aa).

This sequence belongs to the diacylglycerol acyltransferase family.

It is found in the endoplasmic reticulum membrane. Its subcellular location is the lipid droplet. It localises to the cytoplasm. The protein localises to the perinuclear region. The enzyme catalyses an acyl-CoA + a 1,2-diacyl-sn-glycerol = a triacyl-sn-glycerol + CoA. The catalysed reaction is all-trans-retinol + an acyl-CoA = an all-trans-retinyl ester + CoA. It catalyses the reaction 2-(9Z-octadecenoyl)-glycerol + (9Z)-octadecenoyl-CoA = 1,2-di-(9Z-octadecenoyl)-sn-glycerol + CoA. It carries out the reaction 1,2-di-(9Z-octadecenoyl)-sn-glycerol + (9Z)-octadecenoyl-CoA = 1,2,3-tri-(9Z-octadecenoyl)-glycerol + CoA. The enzyme catalyses all-trans-retinol + hexadecanoyl-CoA = all-trans-retinyl hexadecanoate + CoA. The catalysed reaction is 1-O-(9Z-octadecenyl)-glycerol + (9Z)-octadecenoyl-CoA = 1-O-(9Z-octadecyl)-3-(9Z-octadecenoyl)-glycerol + CoA. It catalyses the reaction 1-(9Z-octadecenoyl)-glycerol + (9Z)-octadecenoyl-CoA = 1,2-di-(9Z-octadecenoyl)-glycerol + CoA. It carries out the reaction 1,2-di-(9Z-octadecenoyl)-sn-glycerol + hexadecanoyl-CoA = 1,2-di-(9Z)-octadecenoyl-3-hexadecanoyl-sn-glycerol + CoA. The enzyme catalyses 1,3-di-(9Z-octadecenoyl)-glycerol + (9Z)-octadecenoyl-CoA = 1,2,3-tri-(9Z-octadecenoyl)-glycerol + CoA. The catalysed reaction is 2,3-di-(9Z)-octadecenoyl-sn-glycerol + (9Z)-octadecenoyl-CoA = 1,2,3-tri-(9Z-octadecenoyl)-glycerol + CoA. It catalyses the reaction 2-(9Z-octadecenoyl)-glycerol + hexadecanoyl-CoA = 1-hexadecanoyl-2-(9Z-octadecenoyl)-sn-glycerol + CoA. The protein operates within glycerolipid metabolism; triacylglycerol biosynthesis. Functionally, essential acyltransferase that catalyzes the terminal and only committed step in triacylglycerol synthesis by using diacylglycerol and fatty acyl CoA as substrates. Required for synthesis and storage of intracellular triglycerides. Probably plays a central role in cytosolic lipid accumulation. The chain is Diacylglycerol O-acyltransferase 2 (dgat2) from Xenopus tropicalis (Western clawed frog).